A 190-amino-acid chain; its full sequence is Heme-binding protein 1 (190 aa).

This sequence belongs to the HEBP family. In terms of assembly, monomer.

Its subcellular location is the cytoplasm. Its function is as follows. May bind free porphyrinogens that may be present in the cell and thus facilitate removal of these potentially toxic compound. Binds with a high affinity to one molecule of heme or porphyrins. It binds metalloporphyrins, free porphyrins and N-methylprotoporphyrin with similar affinities. The polypeptide is Heme-binding protein 1 (hebp1) (Xenopus tropicalis (Western clawed frog)).